The sequence spans 337 residues: MNQTELLESLKCASEGMVKAMTSTTMKLNFVFIATVIFLSFYFAGLAIQALLRNNIFSNSTRHILIVCLLNSIVHQAVTLETRIHQVYRSFVYSSEPCRLLFHFTECEVELYFYYLTNYFSTYAVFSLTFDRLVSHYKPKYYFSHQYYVSNSLLIIQLLLSLSTYYVGLYGVPLVGYAPICYYTPRLAVNFSKINDFRTATMVFCIIVTIFIYYLSVKSEKQIHRTSYSPGERYIACENVATSQSVCILIVLQFACIMLSSFGVNYIRARESLMSEENFNKIAPFFPGVTYASLCLPLVIYFKTKLTIRNRKLRIGVMTSMYGDVGDHMNRLKKSWE.

The next 6 helical transmembrane spans lie at 28 to 48, 110 to 130, 155 to 175, 197 to 217, 247 to 267, and 282 to 302; these read LNFV…GLAI, ELYF…SLTF, IIQL…VPLV, FRTA…YLSV, CILI…VNYI, and IAPF…VIYF.

Belongs to the nematode receptor-like protein sra family.

Its subcellular location is the membrane. This is Serpentine receptor class alpha-17 (sra-17) from Caenorhabditis elegans.